The primary structure comprises 154 residues: Transcriptional regulator MraZ (154 aa).

SpoVT-AbrB domains lie at 6–53 and 83–126; these read NSEA…PENV and VEVI…SKEI.

This sequence belongs to the MraZ family. Forms oligomers.

The protein resides in the cytoplasm. The protein localises to the nucleoid. The sequence is that of Transcriptional regulator MraZ from Phocaeicola vulgatus (strain ATCC 8482 / DSM 1447 / JCM 5826 / CCUG 4940 / NBRC 14291 / NCTC 11154) (Bacteroides vulgatus).